Reading from the N-terminus, the 153-residue chain is Large ribosomal subunit protein uL22 (153 aa).

The protein belongs to the universal ribosomal protein uL22 family. In terms of assembly, part of the 50S ribosomal subunit.

Its function is as follows. This protein binds specifically to 23S rRNA. It makes multiple contacts with different domains of the 23S rRNA in the assembled 50S subunit and ribosome. Functionally, the globular domain of the protein is located near the polypeptide exit tunnel on the outside of the subunit, while an extended beta-hairpin is found that lines the wall of the exit tunnel in the center of the 70S ribosome. The protein is Large ribosomal subunit protein uL22 of Methanococcus aeolicus (strain ATCC BAA-1280 / DSM 17508 / OCM 812 / Nankai-3).